Consider the following 409-residue polypeptide: NADH-quinone oxidoreductase subunit D (409 aa).

This sequence belongs to the complex I 49 kDa subunit family. As to quaternary structure, NDH-1 is composed of 14 different subunits. Subunits NuoB, C, D, E, F, and G constitute the peripheral sector of the complex.

The protein resides in the cell inner membrane. The enzyme catalyses a quinone + NADH + 5 H(+)(in) = a quinol + NAD(+) + 4 H(+)(out). Functionally, NDH-1 shuttles electrons from NADH, via FMN and iron-sulfur (Fe-S) centers, to quinones in the respiratory chain. The immediate electron acceptor for the enzyme in this species is believed to be ubiquinone. Couples the redox reaction to proton translocation (for every two electrons transferred, four hydrogen ions are translocated across the cytoplasmic membrane), and thus conserves the redox energy in a proton gradient. The protein is NADH-quinone oxidoreductase subunit D of Helicobacter pylori (strain P12).